A 216-amino-acid chain; its full sequence is NKG2-D type II integral membrane protein (216 aa).

Over 1-51 the chain is Cytoplasmic; the sequence is MGWIRGRRPRHNLEMSEFHNYKLGLAKSDFSTRCQKQRCPVIKSKCRENAS. The chain crosses the membrane as a helical; Signal-anchor for type II membrane protein span at residues 52–72; sequence PLFFCCFIAVAMGIRFIIMVT. Residues 73-216 lie on the Extracellular side of the membrane; sequence IWSAVFLNSL…NTYICMQRTV (144 aa). Cystine bridges form between C96/C105 and C99/C110. The C-type lectin domain maps to 98–213; that stretch reads PCPKNWICYK…SIPNTYICMQ (116 aa). N-linked (GlcNAc...) asparagine glycosylation is found at N115, N131, N163, and N202. 2 disulfides stabilise this stretch: C127-C211 and C189-C203.

Homodimer; disulfide-linked. Heterohexamer composed of two subunits of KLRK1 and four subunits of HCST/DAP10. Interacts (via transmembrane domain) with HCST/DAP10 (via transmembrane domain); the interaction is required for KLRK1 NK cell surface and induces NK cell-mediated cytotoxicity. Can form disulfide-bonded heterodimer with CD94. Interacts with CEACAM1; recruits PTPN6 that dephosphorylates VAV1. In terms of tissue distribution, natural killer cells.

The protein resides in the cell membrane. In terms of biological role, functions as an activating and costimulatory receptor involved in immunosurveillance upon binding to various cellular stress-inducible ligands displayed at the surface of autologous tumor cells and virus-infected cells. Provides both stimulatory and costimulatory innate immune responses on activated killer (NK) cells, leading to cytotoxic activity. Acts as a costimulatory receptor for T-cell receptor (TCR) in CD8(+) T-cell-mediated adaptive immune responses by amplifying T-cell activation. Stimulates perforin-mediated elimination of ligand-expressing tumor cells. Signaling involves calcium influx, culminating in the expression of TNF-alpha. Participates in NK cell-mediated bone marrow graft rejection. May play a regulatory role in differentiation and survival of NK cells. Binds to ligands belonging to various subfamilies of MHC class I-related glycoproteins. The polypeptide is NKG2-D type II integral membrane protein (KLRK1) (Macaca fascicularis (Crab-eating macaque)).